Here is a 387-residue protein sequence, read N- to C-terminus: Cysteine desulfurase IscS (387 aa).

Residues 73–74 (AT), N155, Q183, and 203–205 (SAH) contribute to the pyridoxal 5'-phosphate site. K206 is modified (N6-(pyridoxal phosphate)lysine). T241 contacts pyridoxal 5'-phosphate. C328 acts as the Cysteine persulfide intermediate in catalysis. Residue C328 coordinates [2Fe-2S] cluster.

This sequence belongs to the class-V pyridoxal-phosphate-dependent aminotransferase family. NifS/IscS subfamily. As to quaternary structure, homodimer. Forms a heterotetramer with IscU, interacts with other sulfur acceptors. It depends on pyridoxal 5'-phosphate as a cofactor.

It localises to the cytoplasm. The catalysed reaction is (sulfur carrier)-H + L-cysteine = (sulfur carrier)-SH + L-alanine. Its pathway is cofactor biosynthesis; iron-sulfur cluster biosynthesis. Master enzyme that delivers sulfur to a number of partners involved in Fe-S cluster assembly, tRNA modification or cofactor biosynthesis. Catalyzes the removal of elemental sulfur atoms from cysteine to produce alanine. Functions as a sulfur delivery protein for Fe-S cluster synthesis onto IscU, an Fe-S scaffold assembly protein, as well as other S acceptor proteins. The sequence is that of Cysteine desulfurase IscS from Helicobacter pylori (strain P12).